Here is an 80-residue protein sequence, read N- to C-terminus: FXYD domain-containing ion transport regulator 7 (80 aa).

Over 1–22 the chain is Extracellular; it reads MATPTQSPTNVPEETDPFFYDY. O-linked (GlcNAc) threonine glycosylation is found at threonine 3, threonine 5, and threonine 9. A helical membrane pass occupies residues 23 to 45; the sequence is ATVQTVGMTLATIMFVLGIIIII. Topologically, residues 46 to 80 are cytoplasmic; it reads SKKVKCRKADSRSESPTCKSCKSELPSSAPGGGGV. The segment at 56–80 is disordered; that stretch reads SRSESPTCKSCKSELPSSAPGGGGV. Residue serine 73 is modified to Phosphoserine.

The protein belongs to the FXYD family. Regulatory subunit of the sodium/potassium-transporting ATPase which is composed of a catalytic alpha subunit, a non-catalytic beta subunit and an additional regulatory subunit. The regulatory subunit, a member of the FXYD protein family, modulates the enzymatic activity in a tissue- and isoform-specific way by changing affinities of the Na+/K+-ATPase toward Na(+), K(+) or ATP. O-glycosylated; required for stabilization and translocation to the plasma membrane. As to expression, expressed specifically in brain. Expressed in both neurons and glia.

It is found in the cell membrane. Associates with and regulates the activity of the sodium/potassium-transporting ATPase (NKA) which catalyzes the hydrolysis of ATP coupled with the exchange of Na(+) and K(+) ions across the plasma membrane. Reduces the apparent affinity for external K(+), an effect that depends on the presence of external Na(+) and voltage. Increases the apparent affinity for intracellular Na(+). The protein is FXYD domain-containing ion transport regulator 7 (Fxyd7) of Rattus norvegicus (Rat).